The following is a 240-amino-acid chain: Phosphatidylserine decarboxylase proenzyme (240 aa).

Residue serine 209 is the Schiff-base intermediate with substrate; via pyruvic acid of the active site. Serine 209 carries the post-translational modification Pyruvic acid (Ser); by autocatalysis.

It belongs to the phosphatidylserine decarboxylase family. PSD-A subfamily. In terms of assembly, heterodimer of a large membrane-associated beta subunit and a small pyruvoyl-containing alpha subunit. It depends on pyruvate as a cofactor. In terms of processing, is synthesized initially as an inactive proenzyme. Formation of the active enzyme involves a self-maturation process in which the active site pyruvoyl group is generated from an internal serine residue via an autocatalytic post-translational modification. Two non-identical subunits are generated from the proenzyme in this reaction, and the pyruvate is formed at the N-terminus of the alpha chain, which is derived from the carboxyl end of the proenzyme. The post-translation cleavage follows an unusual pathway, termed non-hydrolytic serinolysis, in which the side chain hydroxyl group of the serine supplies its oxygen atom to form the C-terminus of the beta chain, while the remainder of the serine residue undergoes an oxidative deamination to produce ammonia and the pyruvoyl prosthetic group on the alpha chain.

It localises to the cell membrane. The catalysed reaction is a 1,2-diacyl-sn-glycero-3-phospho-L-serine + H(+) = a 1,2-diacyl-sn-glycero-3-phosphoethanolamine + CO2. It participates in phospholipid metabolism; phosphatidylethanolamine biosynthesis; phosphatidylethanolamine from CDP-diacylglycerol: step 2/2. Functionally, catalyzes the formation of phosphatidylethanolamine (PtdEtn) from phosphatidylserine (PtdSer). This is Phosphatidylserine decarboxylase proenzyme from Mycobacterium marinum (strain ATCC BAA-535 / M).